The chain runs to 165 residues: Nucleotide-binding protein P9301_05061 (165 aa).

It belongs to the YajQ family.

In terms of biological role, nucleotide-binding protein. In Prochlorococcus marinus (strain MIT 9301), this protein is Nucleotide-binding protein P9301_05061.